The primary structure comprises 365 residues: DNA replication and repair protein RecF (365 aa).

ATP is bound at residue 30 to 37 (GQNGSGKT).

The protein belongs to the RecF family.

The protein resides in the cytoplasm. Its function is as follows. The RecF protein is involved in DNA metabolism; it is required for DNA replication and normal SOS inducibility. RecF binds preferentially to single-stranded, linear DNA. It also seems to bind ATP. The chain is DNA replication and repair protein RecF from Shewanella halifaxensis (strain HAW-EB4).